We begin with the raw amino-acid sequence, 482 residues long: Catalase (482 aa).

Residues His53 and Asn126 contribute to the active site. Tyr336 is a heme binding site.

Belongs to the catalase family. Requires heme as cofactor.

It is found in the periplasm. It carries out the reaction 2 H2O2 = O2 + 2 H2O. Decomposes hydrogen peroxide into water and oxygen; serves to protect cells from the toxic effects of hydrogen peroxide. Could protect cells in nodules which have a high potential to produce hydrogen peroxide because of the strong reducing conditions required for nitrogen fixation and the action of several proteins. The protein is Catalase (katA) of Aliivibrio fischeri (strain ATCC 700601 / ES114) (Vibrio fischeri).